The primary structure comprises 405 residues: MTRALVIVLDSVGIGGAPDGAAYGDGGADTLGHIAEACAEGRGDRPGLRAGPLRLPHLAGLGLGLAAREASGRMPPGLAPDGPVAGAWGHAVETARGKDTVSGHWEIAGAPVDFDWGRFPATRPSFPPDLTRALIEEGNLPGILGDCHASGTAVIEAYGAEHLRSGKPICYTSVDSVFQIAAHEEAFGLERLYALCGIARRLCDPYRIGRVIARPFAGSAGTGFVRTANRRDFATPPPGDTLLDRLAAAGRPLVSVGKIGDIFAHRHTGTEVKPAGNDACLDAALAAFADLGPGGLVFANLVDFDTEYGHRRDVPGYAAALERFDARLPEIRAALRPGDLCLVTADHGNDPTWTGTDHTREQVPVLAFGPGQRPGPIGRREGLADIGATVAAHLGLALPAGRSWL.

Mn(2+) contacts are provided by D10, D305, H310, D346, H347, and H358.

Belongs to the phosphopentomutase family. It depends on Mn(2+) as a cofactor.

The protein resides in the cytoplasm. The catalysed reaction is 2-deoxy-alpha-D-ribose 1-phosphate = 2-deoxy-D-ribose 5-phosphate. It catalyses the reaction alpha-D-ribose 1-phosphate = D-ribose 5-phosphate. It participates in carbohydrate degradation; 2-deoxy-D-ribose 1-phosphate degradation; D-glyceraldehyde 3-phosphate and acetaldehyde from 2-deoxy-alpha-D-ribose 1-phosphate: step 1/2. In terms of biological role, isomerase that catalyzes the conversion of deoxy-ribose 1-phosphate (dRib-1-P) and ribose 1-phosphate (Rib-1-P) to deoxy-ribose 5-phosphate (dRib-5-P) and ribose 5-phosphate (Rib-5-P), respectively. The protein is Phosphopentomutase of Methylobacterium sp. (strain 4-46).